We begin with the raw amino-acid sequence, 67 residues long: Large ribosomal subunit protein bL31 (67 aa).

Zn(2+) is bound by residues C16, C18, C38, and C41.

The protein belongs to the bacterial ribosomal protein bL31 family. Type A subfamily. In terms of assembly, part of the 50S ribosomal subunit. Requires Zn(2+) as cofactor.

Functionally, binds the 23S rRNA. This chain is Large ribosomal subunit protein bL31, found in Thioalkalivibrio sulfidiphilus (strain HL-EbGR7).